A 394-amino-acid chain; its full sequence is Elongation factor Tu (394 aa).

Residues 10–204 (KPHVNIGTIG…AVDSYIPQPV (195 aa)) enclose the tr-type G domain. The tract at residues 19 to 26 (GHVDHGKT) is G1. 19-26 (GHVDHGKT) contributes to the GTP binding site. Mg(2+) is bound at residue Thr26. The interval 60–64 (GITIS) is G2. The tract at residues 81 to 84 (DCPG) is G3. Residues 81–85 (DCPGH) and 136–139 (NKID) each bind GTP. The G4 stretch occupies residues 136 to 139 (NKID). Residues 174–176 (SAL) form a G5 region.

The protein belongs to the TRAFAC class translation factor GTPase superfamily. Classic translation factor GTPase family. EF-Tu/EF-1A subfamily. In terms of assembly, monomer.

The protein resides in the cytoplasm. The catalysed reaction is GTP + H2O = GDP + phosphate + H(+). GTP hydrolase that promotes the GTP-dependent binding of aminoacyl-tRNA to the A-site of ribosomes during protein biosynthesis. This chain is Elongation factor Tu, found in Rickettsia rickettsii.